The sequence spans 143 residues: MSTKKVYSFLSQAFIFSAIMLISNIIATHLPIPMPSSVIGLVILFSLLCLKVIKLEQVESLGTALTGIIGFLFVPSGISVINSLGVMGQYFVQILTVIVVATVILLAVTGLFAQFILGKDEKETEDTKELKVVNKGRKHGKVA.

A run of 4 helical transmembrane segments spans residues 6–26 (VYSF…SNII), 30–50 (LPIP…LLCL), 61–81 (LGTA…ISVI), and 97–117 (VIVV…QFIL).

Belongs to the CidA/LrgA family. LrgA subfamily.

It localises to the cell membrane. Inhibits the expression or activity of extracellular murein hydrolases by interacting, possibly with LrgB, with the holin-like protein CidA. The LrgAB and CidA proteins may affect the proton motive force of the membrane. May be involved in programmed cell death (PCD), possibly triggering PCD in response to antibiotics and environmental stresses. This is Antiholin-like protein LrgA from Bacillus anthracis (strain A0248).